Reading from the N-terminus, the 315-residue chain is Hydrogenase-4 component C (315 aa).

The Periplasmic portion of the chain corresponds to 1 to 10 (MRQTLCDGYL). The helical transmembrane segment at 11 to 31 (VIFALAQAVILLMLTPLFTGI) threads the bilayer. Residues 32–73 (SRQIRARMHSRRGPGIWQDYRDIHKLFKRQEVAPTSSGLMFR) lie on the Cytoplasmic side of the membrane. A helical transmembrane segment spans residues 74 to 94 (LMPWVLISSMLVLAMALPLFI). Over 95-98 (TVSP) the chain is Periplasmic. Residues 99 to 119 (FAGGGDLITLIYLLALFRFFF) form a helical membrane-spanning segment. Topologically, residues 120 to 140 (ALSGLDTGSPFAGVGASRELT) are cytoplasmic. The chain crosses the membrane as a helical span at residues 141 to 161 (LGILVEPMLILSLLVLALIAG). At 162–181 (STHIEMISNTLAMGWNSPLT) the chain is on the periplasmic side. The chain crosses the membrane as a helical span at residues 182-202 (TVLALLACGFACFIEMGKIPF). Topologically, residues 203–228 (DVAEAEQELQEGPLTEYSGAGLALAK) are cytoplasmic. A helical transmembrane segment spans residues 229-249 (WGLGLKQVVMASLFVALFLPF). Residues 250–256 (GRAQELS) are Periplasmic-facing. A helical transmembrane segment spans residues 257 to 277 (LACLLTSLVVTLLKVLLIFVL). Over 278 to 289 (ASIAENTLARGR) the chain is Cytoplasmic. The helical transmembrane segment at 290 to 310 (FLLIHHVTWLGFSLAALAWVF) threads the bilayer. Over 311 to 315 (WLTGL) the chain is Periplasmic.

The protein belongs to the complex I subunit 1 family.

It is found in the cell inner membrane. Its function is as follows. Possible component of hydrogenase 4. The sequence is that of Hydrogenase-4 component C from Escherichia coli (strain K12).